The primary structure comprises 55 residues: Protein SOX-19 (55 aa).

Positions 1-55 (MVWSQIERRKIMEQWPDMHNAEISKRLGKRWKLLPDYEKIPFIKEAERLRLKHMA) form a DNA-binding region, HMG box.

The protein localises to the nucleus. This is Protein SOX-19 (Sox19) from Mus musculus (Mouse).